The following is a 300-amino-acid chain: Ribonuclease HIII (300 aa).

The RNase H type-2 domain maps to 83-300 (IPIIGSDEVG…THKAQALLTK (218 aa)). A divalent metal cation contacts are provided by Asp89, Glu90, and Asp194.

The protein belongs to the RNase HII family. RnhC subfamily. Requires Mn(2+) as cofactor. The cofactor is Mg(2+).

The protein localises to the cytoplasm. The enzyme catalyses Endonucleolytic cleavage to 5'-phosphomonoester.. Endonuclease that specifically degrades the RNA of RNA-DNA hybrids. This is Ribonuclease HIII from Streptococcus pyogenes serotype M3 (strain ATCC BAA-595 / MGAS315).